Consider the following 455-residue polypeptide: Ribulose bisphosphate carboxylase large chain (455 aa).

N6,N6,N6-trimethyllysine is present on lysine 5. The substrate site is built by asparagine 114 and threonine 164. Lysine 166 functions as the Proton acceptor in the catalytic mechanism. Residue lysine 168 participates in substrate binding. Mg(2+)-binding residues include lysine 192, aspartate 194, and glutamate 195. Position 192 is an N6-carboxylysine (lysine 192). Histidine 285 functions as the Proton acceptor in the catalytic mechanism. Residues arginine 286, histidine 318, and serine 370 each contribute to the substrate site.

Belongs to the RuBisCO large chain family. Type I subfamily. In terms of assembly, heterohexadecamer of 8 large chains and 8 small chains; disulfide-linked. The disulfide link is formed within the large subunit homodimers. The cofactor is Mg(2+). The disulfide bond which can form in the large chain dimeric partners within the hexadecamer appears to be associated with oxidative stress and protein turnover.

The protein localises to the plastid. Its subcellular location is the chloroplast. It catalyses the reaction 2 (2R)-3-phosphoglycerate + 2 H(+) = D-ribulose 1,5-bisphosphate + CO2 + H2O. It carries out the reaction D-ribulose 1,5-bisphosphate + O2 = 2-phosphoglycolate + (2R)-3-phosphoglycerate + 2 H(+). Its function is as follows. RuBisCO catalyzes two reactions: the carboxylation of D-ribulose 1,5-bisphosphate, the primary event in carbon dioxide fixation, as well as the oxidative fragmentation of the pentose substrate in the photorespiration process. Both reactions occur simultaneously and in competition at the same active site. The chain is Ribulose bisphosphate carboxylase large chain from Erythrina crista-galli (Cockspur coral tree).